A 519-amino-acid chain; its full sequence is MIPDVSQALSWLESHPNALDGIRRGIERETLRVTPEGHLATTPHPAVLGKALTHPWITTDFAESLLEFITPVDGSIDHMLTFLSDIHRYVARNLGDERMWPLSMPCFIGSEQDIILAQYGSSNLGRFKTLYREGLKNRYGALMQTISGVHYNFSLPLSFWQARAGVQDADSGKAAISDGYFRLIRNYYRFGWVIPYLFGASPAICSSFLNGRESALPFERRGGTLFLPYATSLRLSDLGYTNKSQSNLGITFNHLNQYVEGLKRAIHTPSAEFARLGVEESGHYHQLNANILQIENELYAPIRPKRVTRDGESPSDALLRGGVEYIEVRSLDINPFTPIGVDADQARFLDLFLIWCVLADAPEMSSDELLCTRQNWNRVILEGRKPGQTIGIGCHDARQPLAYVGQSLFADLHRVAEVLDGINGDARYQQVCARLVAAFEDVSLTYSARVVAQMGERGIGGYGLTLAQHYRDRLCSEPLALLDETTLAVQAQRSVTRQAALESQSCESFASYLRQHAGG.

This sequence belongs to the glutamate--cysteine ligase type 1 family. Type 1 subfamily.

It catalyses the reaction L-cysteine + L-glutamate + ATP = gamma-L-glutamyl-L-cysteine + ADP + phosphate + H(+). Its pathway is sulfur metabolism; glutathione biosynthesis; glutathione from L-cysteine and L-glutamate: step 1/2. This is Glutamate--cysteine ligase from Edwardsiella ictaluri (strain 93-146).